Consider the following 706-residue polypeptide: Translation initiation factor IF-2 (706 aa).

The span at 55 to 81 (AKETANEKPAEQKKQSSNKINDRKKND) shows a compositional bias: basic and acidic residues. Residues 55 to 127 (AKETANEKPA…KPKKELPEKI (73 aa)) form a disordered region. The span at 82 to 98 (VQNNQFNKNKKNNNQNK) shows a compositional bias: low complexity. Residues 207 to 376 (VRPPVVTIMG…LLVSEVGELK (170 aa)) form the tr-type G domain. The G1 stretch occupies residues 216–223 (GHVDHGKT). Residue 216–223 (GHVDHGKT) coordinates GTP. A G2 region spans residues 241 to 245 (GITQH). The G3 stretch occupies residues 262-265 (DTPG). Residues 262–266 (DTPGH) and 316–319 (NKID) contribute to the GTP site. Residues 316 to 319 (NKID) are G4. A G5 region spans residues 352–354 (SAK).

The protein belongs to the TRAFAC class translation factor GTPase superfamily. Classic translation factor GTPase family. IF-2 subfamily.

It localises to the cytoplasm. One of the essential components for the initiation of protein synthesis. Protects formylmethionyl-tRNA from spontaneous hydrolysis and promotes its binding to the 30S ribosomal subunits. Also involved in the hydrolysis of GTP during the formation of the 70S ribosomal complex. The chain is Translation initiation factor IF-2 from Bacillus pumilus (strain SAFR-032).